Here is a 214-residue protein sequence, read N- to C-terminus: Putative archaetidylserine decarboxylase proenzyme (214 aa).

Serine 180 serves as the catalytic Schiff-base intermediate with substrate; via pyruvic acid. Serine 180 is modified (pyruvic acid (Ser); by autocatalysis).

It belongs to the phosphatidylserine decarboxylase family. PSD-A subfamily. In terms of assembly, heterodimer of a large membrane-associated beta subunit and a small pyruvoyl-containing alpha subunit. Pyruvate is required as a cofactor. Post-translationally, is synthesized initially as an inactive proenzyme. Formation of the active enzyme involves a self-maturation process in which the active site pyruvoyl group is generated from an internal serine residue via an autocatalytic post-translational modification. Two non-identical subunits are generated from the proenzyme in this reaction, and the pyruvate is formed at the N-terminus of the alpha chain, which is derived from the carboxyl end of the proenzyme. The post-translation cleavage follows an unusual pathway, termed non-hydrolytic serinolysis, in which the side chain hydroxyl group of the serine supplies its oxygen atom to form the C-terminus of the beta chain, while the remainder of the serine residue undergoes an oxidative deamination to produce ammonia and the pyruvoyl prosthetic group on the alpha chain.

It localises to the cell membrane. The enzyme catalyses archaetidylserine + H(+) = archaetidylethanolamine + CO2. Functionally, catalyzes the formation of archaetidylethanolamine (PtdEtn) from archaetidylserine (PtdSer). The sequence is that of Putative archaetidylserine decarboxylase proenzyme from Methanopyrus kandleri (strain AV19 / DSM 6324 / JCM 9639 / NBRC 100938).